A 117-amino-acid polypeptide reads, in one-letter code: Large ribosomal subunit protein bL20 (117 aa).

The protein belongs to the bacterial ribosomal protein bL20 family.

Functionally, binds directly to 23S ribosomal RNA and is necessary for the in vitro assembly process of the 50S ribosomal subunit. It is not involved in the protein synthesizing functions of that subunit. This is Large ribosomal subunit protein bL20 from Campylobacter fetus subsp. fetus (strain 82-40).